The chain runs to 526 residues: Zinc finger protein Helios (526 aa).

Positions 28-94 (DLTSSTPNGQ…IESSEVADNR (67 aa)) are disordered. Residues 29–50 (LTSSTPNGQHASPSHMTSTNSV) are compositionally biased toward polar residues. Residue serine 56 is modified to Phosphoserine. Positions 61–77 (DRQPLSREDEIRGHDEG) are enriched in basic and acidic residues. 2 positions are modified to phosphoserine: serine 78 and serine 79. Residue lysine 95 forms a Glycyl lysine isopeptide (Lys-Gly) (interchain with G-Cter in SUMO2) linkage. 4 consecutive C2H2-type zinc fingers follow at residues 112–134 (LKCD…KRSH), 140–162 (FHCN…IKLH), 168–190 (FKCP…LRTH), and 196–219 (HKCN…ERCH). Lysine 288 is modified (N6-acetyllysine). Residues 368–379 (ISRETSDSHENN) are compositionally biased toward basic and acidic residues. Residues 368 to 435 (ISRETSDSHE…LNPKRKQSPA (68 aa)) are disordered. Glycyl lysine isopeptide (Lys-Gly) (interchain with G-Cter in SUMO2) cross-links involve residues lysine 442 and lysine 448. 2 C2H2-type zinc fingers span residues 471–493 (FKCE…MGCH) and 499–523 (LECN…RGEH).

It belongs to the Ikaros C2H2-type zinc-finger protein family. Can form homodimers. Interacts with IKZF4 and IKZF5. Expressed in outer hair cells (OHC) of the organ of Corti. Abundant in thymus, low expression in bone marrow and brain and no detectable expression in spleen, liver, kidney or muscle. Expressed in T-cells.

It is found in the nucleus. Transcriptional regulator required for outer hair cells (OHC) maturation and, consequently, for hearing. The sequence is that of Zinc finger protein Helios (Ikzf2) from Mus musculus (Mouse).